The sequence spans 467 residues: Glycogen synthase (467 aa).

K16 is a binding site for ADP-alpha-D-glucose.

The protein belongs to the glycosyltransferase 1 family. Bacterial/plant glycogen synthase subfamily.

The enzyme catalyses [(1-&gt;4)-alpha-D-glucosyl](n) + ADP-alpha-D-glucose = [(1-&gt;4)-alpha-D-glucosyl](n+1) + ADP + H(+). It participates in glycan biosynthesis; glycogen biosynthesis. In terms of biological role, synthesizes alpha-1,4-glucan chains using ADP-glucose. In Paracoccus denitrificans (strain Pd 1222), this protein is Glycogen synthase.